The chain runs to 365 residues: MGASGILQLPRERFRKTSFFVWVIILFHKVFSIPLGVVHNNTLQVSDIDKFVCRDKLSSTSQLKSVGLNLEGNGVATDVPTATKRWGFRAGVPPKVVNYEAGEWAENCYNLAIKKVDGSECLPEAPEGVRDFPRCRYVHKVSGTGPCPGGLAFHKEGAFFLYDRLASTIIYRGTTFAEGVIAFLILPKARKDFFQSPPLHEPANMTTDPSSYYHTTTINYVVDNFGTNTTEFLFQVDHLTYVQLEARFTPQFLVLLNETIYSDNRRSNTTGKLIWKINPTVDTSMGEWAFWENKKTSQKPFQVKSCLSYLYQKPRTRSLTRQRRSLLPSPPTTTQAKTTKNWFQRIPLQWFRCKTSRERTQCQPQ.

The N-terminal stretch at 1 to 32 (MGASGILQLPRERFRKTSFFVWVIILFHKVFS) is a signal peptide. Asparagine 40 is a glycosylation site (N-linked (GlcNAc...) asparagine; by host). 2 disulfides stabilise this stretch: cysteine 108–cysteine 135 and cysteine 121–cysteine 147. N-linked (GlcNAc...) asparagine; by host glycans are attached at residues asparagine 204, asparagine 228, asparagine 257, and asparagine 268.

It belongs to the filoviruses glycoprotein family. In terms of assembly, homodimer; disulfide-linked. The homodimers are linked by two disulfide bonds in a parallel orientation. As to quaternary structure, monomer. This precursor is processed into mature sGP and delta-peptide by host furin or furin-like proteases. The cleavage site corresponds to the furin optimal cleavage sequence [KR]-X-[KR]-R. Post-translationally, N-glycosylated. In terms of processing, O-glycosylated.

The protein resides in the secreted. Functionally, seems to possess an anti-inflammatory activity as it can reverse the barrier-decreasing effects of TNF alpha. Might therefore contribute to the lack of inflammatory reaction seen during infection in spite the of extensive necrosis and massive virus production. Does not seem to be involved in activation of primary macrophages. Does not seem to interact specifically with neutrophils. In terms of biological role, viroporin that permeabilizes mammalian cell plasma membranes. It acts by altering permeation of ionic compounds and small molecules. This activity may lead to viral enterotoxic activity. The sequence is that of Pre-small/secreted glycoprotein (GP) from Epomops franqueti (Franquet's epauletted fruit bat).